Reading from the N-terminus, the 1132-residue chain is Protein sel-1 homolog 3 (1132 aa).

Positions 1 to 24 are disordered; it reads MQRRGAGLGWPRQQQQQPPPLAVG. N-linked (GlcNAc...) asparagine glycosylation is found at asparagine 201, asparagine 382, and asparagine 527. 7 Sel1-like repeats span residues 575–609, 611–647, 694–730, 732–767, 768–800, 801–839, and 840–877; these read YLAV…RLSS, NLGY…DQHT, RLAQ…PALI, DYAI…QAVN, GLGW…DASY, NLGV…EGTL, and WCSL…LGHV. Serine 608 carries the phosphoserine modification. A glycan (N-linked (GlcNAc...) asparagine) is linked at asparagine 937. One copy of the Sel1-like 8 repeat lies at 952–988; it reads KMGDLYYYGHQNQSQDLELSVQMYAQAALDGDSQGFF. A helical membrane pass occupies residues 1057-1077; the sequence is ILHSALIYFLGTFLLSILIAW. A disordered region spans residues 1087–1132; sequence ASDPPPRPSQASPDTATSTASPAVTPAADASDQDQPTVTNNPEPRG. Over residues 1097 to 1116 the composition is skewed to low complexity; that stretch reads ASPDTATSTASPAVTPAADA. A compositionally biased stretch (polar residues) spans 1119 to 1132; that stretch reads QDQPTVTNNPEPRG.

It is found in the membrane. In Homo sapiens (Human), this protein is Protein sel-1 homolog 3 (SEL1L3).